Reading from the N-terminus, the 278-residue chain is Phosphatidylglycerol--prolipoprotein diacylglyceryl transferase (278 aa).

4 helical membrane-spanning segments follow: residues 19-39 (WYGILMATGVLVATLMAINEG), 49-69 (FIDFLLWAVPIGFIGARIYYV), 86-106 (IWNGGIAIYGGLIAGLIVLLI), and 112-132 (MLPPFLMLDIIAPGVMAAQVI). Arg-134 is an a 1,2-diacyl-sn-glycero-3-phospho-(1'-sn-glycerol) binding site. 3 helical membrane passes run 174 to 194 (QPTYLYESTLNLIGLILILSL), 204 to 224 (GEIFLSYVIWYSAVRFFVEGM), and 235 to 255 (IRVSQALSLILFFGAIILWIY).

It belongs to the Lgt family.

It localises to the cell membrane. The catalysed reaction is L-cysteinyl-[prolipoprotein] + a 1,2-diacyl-sn-glycero-3-phospho-(1'-sn-glycerol) = an S-1,2-diacyl-sn-glyceryl-L-cysteinyl-[prolipoprotein] + sn-glycerol 1-phosphate + H(+). It participates in protein modification; lipoprotein biosynthesis (diacylglyceryl transfer). Functionally, catalyzes the transfer of the diacylglyceryl group from phosphatidylglycerol to the sulfhydryl group of the N-terminal cysteine of a prolipoprotein, the first step in the formation of mature lipoproteins. This chain is Phosphatidylglycerol--prolipoprotein diacylglyceryl transferase, found in Lactobacillus johnsonii (strain CNCM I-12250 / La1 / NCC 533).